Here is a 199-residue protein sequence, read N- to C-terminus: DnaJ homolog subfamily C member 5B (199 aa).

Ser14 and Ser16 each carry phosphoserine. The region spanning 19-84 (ALYEILGLHK…SKRNIYDKYG (66 aa)) is the J domain.

In terms of assembly, interacts with the chaperone complex consisting of HSC70 and SGTA. Palmitoylated.

It is found in the membrane. The polypeptide is DnaJ homolog subfamily C member 5B (DNAJC5B) (Sus scrofa (Pig)).